The following is a 291-amino-acid chain: Nucleotide-binding protein lwe2422 (291 aa).

13–20 serves as a coordination point for ATP; sequence GMSGAGKT. 63–66 serves as a coordination point for GTP; that stretch reads DLRG.

It belongs to the RapZ-like family.

Its function is as follows. Displays ATPase and GTPase activities. The sequence is that of Nucleotide-binding protein lwe2422 from Listeria welshimeri serovar 6b (strain ATCC 35897 / DSM 20650 / CCUG 15529 / CIP 8149 / NCTC 11857 / SLCC 5334 / V8).